A 298-amino-acid polypeptide reads, in one-letter code: Small ribosomal subunit protein uS2 (298 aa).

Residues 240 to 298 are disordered; that stretch reads AGENWDTQAPGAGVPGSAFAAASAAAATSWEADGGDWAASSAPPAGESWAETQPTEAKW. The span at 248–271 shows a compositional bias: low complexity; that stretch reads APGAGVPGSAFAAASAAAATSWEA. Residues 289 to 298 show a composition bias toward polar residues; that stretch reads AETQPTEAKW.

It belongs to the universal ribosomal protein uS2 family. In terms of assembly, component of the small ribosomal subunit. Mature ribosomes consist of a small (40S) and a large (60S) subunit. The 40S subunit contains about 33 different proteins and 1 molecule of RNA (18S). The 60S subunit contains about 49 different proteins and 3 molecules of RNA (25S, 5.8S and 5S). Interacts with rps21.

The protein resides in the cytoplasm. Functionally, required for the assembly and/or stability of the 40S ribosomal subunit. Required for the processing of the 20S rRNA-precursor to mature 18S rRNA in a late step of the maturation of 40S ribosomal subunits. The protein is Small ribosomal subunit protein uS2 (rps0) of Aspergillus clavatus (strain ATCC 1007 / CBS 513.65 / DSM 816 / NCTC 3887 / NRRL 1 / QM 1276 / 107).